Consider the following 243-residue polypeptide: Probable intron-encoded endonuclease aI3 (243 aa).

Belongs to the LAGLIDADG endonuclease family.

The protein localises to the mitochondrion. Mitochondrial DNA endonuclease involved in intron homing. The sequence is that of Probable intron-encoded endonuclease aI3 (aI3) from Dictyostelium citrinum (Slime mold).